We begin with the raw amino-acid sequence, 261 residues long: Hydrolase in agr operon (261 aa).

Residues 1–239 (MKVQIYQLPI…ADILTVDLNL (239 aa)) form the CN hydrolase domain. Glutamate 41 (proton acceptor) is an active-site residue. Residue lysine 110 is the Proton donor of the active site. Cysteine 146 serves as the catalytic Nucleophile.

Belongs to the carbon-nitrogen hydrolase superfamily. NIT1/NIT2 family.

In Staphylococcus aureus, this protein is Hydrolase in agr operon.